The primary structure comprises 279 residues: Dermonecrotic toxin LbSicTox-alphaIB1a (279 aa).

Residue His11 is part of the active site. The Mg(2+) site is built by Glu31 and Asp33. His47 serves as the catalytic Nucleophile. Disulfide bonds link Cys51-Cys57 and Cys53-Cys196. Asp91 contacts Mg(2+).

It belongs to the arthropod phospholipase D family. Class II subfamily. Class IIa sub-subfamily. Requires Mg(2+) as cofactor. Expressed by the venom gland.

The protein resides in the secreted. It catalyses the reaction an N-(acyl)-sphingosylphosphocholine = an N-(acyl)-sphingosyl-1,3-cyclic phosphate + choline. The enzyme catalyses an N-(acyl)-sphingosylphosphoethanolamine = an N-(acyl)-sphingosyl-1,3-cyclic phosphate + ethanolamine. The catalysed reaction is a 1-acyl-sn-glycero-3-phosphocholine = a 1-acyl-sn-glycero-2,3-cyclic phosphate + choline. It carries out the reaction a 1-acyl-sn-glycero-3-phosphoethanolamine = a 1-acyl-sn-glycero-2,3-cyclic phosphate + ethanolamine. In terms of biological role, dermonecrotic toxins cleave the phosphodiester linkage between the phosphate and headgroup of certain phospholipids (sphingolipid and lysolipid substrates), forming an alcohol (often choline) and a cyclic phosphate. This toxin acts on sphingomyelin (SM) with high activity (about 30.5-31.5 U/mg). It may also act on ceramide phosphoethanolamine (CPE), lysophosphatidylcholine (LPC) and lysophosphatidylethanolamine (LPE), but not on lysophosphatidylserine (LPS), and lysophosphatidylglycerol (LPG). It acts by transphosphatidylation, releasing exclusively cyclic phosphate products as second products. Induces dermonecrosis, hemolysis, increased vascular permeability, edema, inflammatory response, and platelet aggregation. Is lethal to mice. This Loxosceles boneti (North American fiddleback spider) protein is Dermonecrotic toxin LbSicTox-alphaIB1a.